Reading from the N-terminus, the 339-residue chain is Phenylalanine--tRNA ligase alpha subunit (339 aa).

E254 serves as a coordination point for Mg(2+).

Belongs to the class-II aminoacyl-tRNA synthetase family. Phe-tRNA synthetase alpha subunit type 1 subfamily. As to quaternary structure, tetramer of two alpha and two beta subunits. The cofactor is Mg(2+).

The protein resides in the cytoplasm. The catalysed reaction is tRNA(Phe) + L-phenylalanine + ATP = L-phenylalanyl-tRNA(Phe) + AMP + diphosphate + H(+). This is Phenylalanine--tRNA ligase alpha subunit from Dictyoglomus thermophilum (strain ATCC 35947 / DSM 3960 / H-6-12).